Consider the following 335-residue polypeptide: Heme A synthase (335 aa).

A run of 8 helical transmembrane segments spans residues 9-29 (VAIWLFLCSIMIVLMVGIGGF), 90-110 (YVHRLFARLTGLIFILPFIYF), 120-140 (VVIRLSIALSFGVLQAFTGWY), 156-176 (MLTLHLLLALVIFALLSYQFF), 197-217 (VGIILILIVVQIIFGAFVAGL), 255-275 (VQFIHRTLALLILVLTTVLTI), 283-303 (VYVMLLSVIIQIILGVVTLLL), and 309-329 (IAISHQMFSFILFGSGLCFLC). Residue His259 participates in heme binding. Position 313 (His313) interacts with heme.

The protein belongs to the COX15/CtaA family. Type 2 subfamily. Interacts with CtaB. Heme b serves as cofactor.

The protein resides in the cell membrane. It carries out the reaction Fe(II)-heme o + 2 A + H2O = Fe(II)-heme a + 2 AH2. Its pathway is porphyrin-containing compound metabolism; heme A biosynthesis; heme A from heme O: step 1/1. Its function is as follows. Catalyzes the conversion of heme O to heme A by two successive hydroxylations of the methyl group at C8. The first hydroxylation forms heme I, the second hydroxylation results in an unstable dihydroxymethyl group, which spontaneously dehydrates, resulting in the formyl group of heme A. The protein is Heme A synthase of Wolbachia sp. subsp. Brugia malayi (strain TRS).